Here is a 256-residue protein sequence, read N- to C-terminus: Thiazole synthase (256 aa).

Catalysis depends on lysine 95, which acts as the Schiff-base intermediate with DXP. Residues glycine 156, 182-183, and 204-205 contribute to the 1-deoxy-D-xylulose 5-phosphate site; these read AG and NT.

Belongs to the ThiG family. Homotetramer. Forms heterodimers with either ThiH or ThiS.

Its subcellular location is the cytoplasm. The catalysed reaction is [ThiS sulfur-carrier protein]-C-terminal-Gly-aminoethanethioate + 2-iminoacetate + 1-deoxy-D-xylulose 5-phosphate = [ThiS sulfur-carrier protein]-C-terminal Gly-Gly + 2-[(2R,5Z)-2-carboxy-4-methylthiazol-5(2H)-ylidene]ethyl phosphate + 2 H2O + H(+). The protein operates within cofactor biosynthesis; thiamine diphosphate biosynthesis. Catalyzes the rearrangement of 1-deoxy-D-xylulose 5-phosphate (DXP) to produce the thiazole phosphate moiety of thiamine. Sulfur is provided by the thiocarboxylate moiety of the carrier protein ThiS. In vitro, sulfur can be provided by H(2)S. This is Thiazole synthase from Photobacterium profundum (strain SS9).